The following is a 154-amino-acid chain: Large ribosomal subunit protein uL13 (154 aa).

It belongs to the universal ribosomal protein uL13 family. Part of the 50S ribosomal subunit.

This protein is one of the early assembly proteins of the 50S ribosomal subunit, although it is not seen to bind rRNA by itself. It is important during the early stages of 50S assembly. This is Large ribosomal subunit protein uL13 from Rhizobium johnstonii (strain DSM 114642 / LMG 32736 / 3841) (Rhizobium leguminosarum bv. viciae).